Reading from the N-terminus, the 836-residue chain is Ethylene receptor 3 (836 aa).

Transmembrane regions (helical) follow at residues 137-157 (LIAA…AGLR), 166-186 (LVQF…TAFT), and 204-224 (LTAL…PQLL). Residues Cys-176 and His-180 each contribute to the Cu cation site. In terms of domain architecture, GAF spans 269 to 413 (DRHTVLYTTL…VVAGQVAVAL (145 aa)). Positions 416–452 (ATLLEESRAMRDRLAEQNRELLQARRDALMANEARQA) form a coiled coil. In terms of domain architecture, Histidine kinase spans 457–691 (MSQGMRRPIH…LVLRFQLQSP (235 aa)). Residues 718–834 (LLIDDDDDIN…LKDELARILQ (117 aa)) enclose the Response regulatory domain.

The protein belongs to the ethylene receptor family. Cu cation serves as cofactor.

It localises to the endoplasmic reticulum membrane. It carries out the reaction ATP + protein L-histidine = ADP + protein N-phospho-L-histidine.. In terms of biological role, ethylene receptor related to bacterial two-component regulators. Acts as a negative regulator of ethylene signaling. May delay the transition from the vegetative stage to the floral stage by up-regulating GI (GIGANTEA) and RCN1 and cause starch accumulation in stems by down-regulating the alpha-amylase AMY3D. This Oryza sativa subsp. japonica (Rice) protein is Ethylene receptor 3 (ETR3).